Here is a 120-residue protein sequence, read N- to C-terminus: Large ribosomal subunit protein uL18 (120 aa).

This sequence belongs to the universal ribosomal protein uL18 family. As to quaternary structure, part of the 50S ribosomal subunit. Part of the 5S rRNA/L5/L18/L25 subcomplex. Contacts the 23S rRNA and 5S rRNA. Required for catalysis of RNase M5.

Functionally, this is one of the proteins that bind and probably mediate the attachment of the 5S RNA into the large ribosomal subunit, where it forms part of the central protuberance. Required for correct processing of both the 5' and 3' ends of 5S rRNA precursor, which is does in conjunction with ribonuclease M5 (RNase M5, rnmV). Possibly folds the 5S rRNA precursor into the correct conformation, thus acting as a chaperone. This chain is Large ribosomal subunit protein uL18, found in Bacillus subtilis (strain 168).